The following is an 837-amino-acid chain: Tuftelin-interacting protein 11 (837 aa).

Basic and acidic residues-rich tracts occupy residues 1–13 (MSLSHLYRDGEGR) and 53–64 (VWAERDSDDERP). Disordered regions lie at residues 1 to 21 (MSLSHLYRDGEGRIDDDDDER), 53 to 72 (VWAERDSDDERPSFGGKRAR), and 85 to 133 (LKKG…KGFA). The required for interaction with DHX15 stretch occupies residues 1–50 (MSLSHLYRDGEGRIDDDDDERENFEITDWDLQNEFNPNRQRHWQTKEEAT). Phosphoserine occurs at positions 2, 59, and 98. Over residues 91 to 102 (EEAELEDSDDEE) the composition is skewed to acidic residues. The span at 103–116 (KPVKQDDFPKDFGP) shows a compositional bias: basic and acidic residues. S144 bears the Phosphoserine mark. The 47-residue stretch at 149-195 (TKGIGQKLLQKMGYVPGRGLGKNAQGIINPIEAKQRKGKGAVGAYGS) folds into the G-patch domain. The tract at residues 179–236 (IEAKQRKGKGAVGAYGSERTTQSMQDFPVVDSEEEAEEEFQKELSQWRKDPSGSKKKP) is disordered. A Phosphoserine modification is found at S210. The span at 217-231 (EFQKELSQWRKDPSG) shows a compositional bias: basic and acidic residues. Residues 700-705 (VKDKFN) carry the Nuclear localization signal motif. Residues 710–734 (IMNRAVSSNVGAYMQPGARENIAYL) are required for nuclear speckle localization.

This sequence belongs to the TFP11/STIP family. In terms of assembly, identified in the spliceosome C complex. Found in the Intron Large (IL) complex, a post-mRNA release spliceosomal complex containing the excised intron, U2, U5 and U6 snRNPs, and splicing factors. Interacts with TUFT1. Interacts with DHX15; indicative for a recruitment of DHX15 to the IL complex. Interacts with GCFC2.

The protein resides in the cytoplasm. It is found in the nucleus. Involved in pre-mRNA splicing, specifically in spliceosome disassembly during late-stage splicing events. Intron turnover seems to proceed through reactions in two lariat-intron associated complexes termed Intron Large (IL) and Intron Small (IS). In cooperation with DHX15 seems to mediate the transition of the U2, U5 and U6 snRNP-containing IL complex to the snRNP-free IS complex leading to efficient debranching and turnover of excised introns. May play a role in the differentiation of ameloblasts and odontoblasts or in the forming of the enamel extracellular matrix. The sequence is that of Tuftelin-interacting protein 11 (TFIP11) from Pan troglodytes (Chimpanzee).